We begin with the raw amino-acid sequence, 468 residues long: Chitoporin (468 aa).

The signal sequence occupies residues 1–32 (MRTFSGKRSTLALAIAGVTAMSGFMAMPEARA).

This sequence belongs to the outer membrane porin (Opr) (TC 1.B.25) family.

Its subcellular location is the cell outer membrane. Involved in the uptake of chitosugars. This is Chitoporin (chiP) from Escherichia coli (strain K12).